A 447-amino-acid polypeptide reads, in one-letter code: Clusterin (447 aa).

Positions 1 to 21 (MKILLLCVALLLTWDNGMVLG) are cleaved as a signal peptide. Residues 77 to 80 (KKKK) carry the Nuclear localization signal motif. 5 disulfides stabilise this stretch: Cys101-Cys312, Cys112-Cys304, Cys115-Cys301, Cys120-Cys294, and Cys128-Cys284. Residue Asn102 is glycosylated (N-linked (GlcNAc...) asparagine). Ser132 carries the post-translational modification Phosphoserine. N-linked (GlcNAc...) asparagine glycosylation is found at Asn144, Asn290, Asn327, Asn353, and Asn373. Ser394 carries the post-translational modification Phosphoserine. Positions 441–445 (RRKSR) match the Nuclear localization signal motif.

The protein belongs to the clusterin family. As to quaternary structure, antiparallel disulfide-linked heterodimer of an alpha chain and a beta chain. Self-associates and forms higher oligomers. Interacts with a broad range of misfolded proteins, including APP, APOC2 and LYZ. Slightly acidic pH promotes interaction with misfolded proteins. Forms high-molecular weight oligomers upon interaction with misfolded proteins. Interacts with APOA1, LRP2, CLUAP1 and PON1. Interacts with the complement membrane attack complex. Interacts (via alpha chain) with XRCC6. Interacts with SYVN1, COMMD1, BTRC, CUL1 and with ubiquitin and SCF (SKP1-CUL1-F-box protein) E3 ubiquitin-protein ligase complexes. Interacts (via alpha chain) with BAX in stressed cells, where BAX undergoes a conformation change leading to association with the mitochondrial membrane. Does not interact with BAX in unstressed cells. Found in a complex with LTF, CLU, EPPIN and SEMG1. Interacts (immaturely glycosylated pre-secreted form) with HSPA5; this interaction promotes CLU stability and facilitates stress-induced CLU retrotranslocation from the secretory pathway to the mitochondria, thereby reducing stress-induced apoptosis by stabilizing mitochondrial membrane integrity. Interacts with BCL2L1; this interaction releases and activates BAX and promotes cell death. Interacts with TGFBR2 and ACVR1. Interacts (secreted form) with STMN3; this interaction may act as an important modulator during neuronal differentiation. Interacts with VLDLR and LRP8. Post-translationally, proteolytically cleaved on its way through the secretory system, probably within the Golgi lumen. Proteolytic cleavage is not necessary for its chaperone activity. All non-secreted forms are not proteolytically cleaved. Chaperone activity of uncleaved forms is dependent on a non-reducing environment. Polyubiquitinated, leading to proteasomal degradation. Under cellular stress, the intracellular level of cleaved form is reduced due to proteasomal degradation. In terms of processing, extensively glycosylated with sulfated N-linked carbohydrates. About 30% of the protein mass is comprised of complex N-linked carbohydrate. Endoplasmic reticulum (ER) stress induces changes in glycosylation status and increases level of hypoglycosylated forms. Core carbohydrates are essential for chaperone activity. Non-secreted forms are hypoglycosylated or unglycosylated. In terms of tissue distribution, detected in Sertoli cells (at protein level). Detected in cultured Sertoli cells, testis, epididymis, liver and brain.

The protein resides in the secreted. Its subcellular location is the nucleus. It localises to the cytoplasm. It is found in the mitochondrion membrane. The protein localises to the cytosol. The protein resides in the microsome. Its subcellular location is the endoplasmic reticulum. It localises to the mitochondrion. It is found in the perinuclear region. The protein localises to the cytoplasmic vesicle. The protein resides in the secretory vesicle. Its subcellular location is the chromaffin granule. Functionally, functions as extracellular chaperone that prevents aggregation of non native proteins. Prevents stress-induced aggregation of blood plasma proteins. Inhibits formation of amyloid fibrils by APP, APOC2, B2M, CALCA, CSN3, SNCA and aggregation-prone LYZ variants (in vitro). Does not require ATP. Maintains partially unfolded proteins in a state appropriate for subsequent refolding by other chaperones, such as HSPA8/HSC70. Does not refold proteins by itself. Binding to cell surface receptors triggers internalization of the chaperone-client complex and subsequent lysosomal or proteasomal degradation. When secreted, protects cells against apoptosis and against cytolysis by complement: inhibits assembly of the complement membrane attack complex (MAC) by preventing polymerization of C9 pore component of the MAC complex. Intracellular forms interact with ubiquitin and SCF (SKP1-CUL1-F-box protein) E3 ubiquitin-protein ligase complexes and promote the ubiquitination and subsequent proteasomal degradation of target proteins. Promotes proteasomal degradation of COMMD1 and IKBKB. Modulates NF-kappa-B transcriptional activity. Following stress, promotes apoptosis. Inhibits apoptosis when associated with the mitochondrial membrane by interference with BAX-dependent release of cytochrome c into the cytoplasm. Plays a role in the regulation of cell proliferation. An intracellular form suppresses stress-induced apoptosis by stabilizing mitochondrial membrane integrity through interaction with HSPA5. Secreted form does not affect caspase or BAX-mediated intrinsic apoptosis and TNF-induced NF-kappa-B-activity. Secreted form act as an important modulator during neuronal differentiation through interaction with STMN3. Plays a role in the clearance of immune complexes that arise during cell injury. The polypeptide is Clusterin (Rattus norvegicus (Rat)).